A 143-amino-acid polypeptide reads, in one-letter code: uncharacterized protein (143 aa).

The next 4 helical transmembrane spans lie at Leu-7 to Val-29, Phe-52 to Leu-74, Leu-87 to Gly-105, and Trp-120 to Gly-142.

The protein resides in the cell membrane. This is an uncharacterized protein from Aquifex aeolicus (strain VF5).